A 172-amino-acid polypeptide reads, in one-letter code: Dual-action ribosomal maturation protein DarP (172 aa).

It belongs to the DarP family.

Its subcellular location is the cytoplasm. Its function is as follows. Member of a network of 50S ribosomal subunit biogenesis factors which assembles along the 30S-50S interface, preventing incorrect 23S rRNA structures from forming. Promotes peptidyl transferase center (PTC) maturation. The sequence is that of Dual-action ribosomal maturation protein DarP from Ectopseudomonas mendocina (strain ymp) (Pseudomonas mendocina).